We begin with the raw amino-acid sequence, 451 residues long: UDP-N-acetylmuramate--L-alanine ligase (451 aa).

110-116 (GTHGKTT) provides a ligand contact to ATP.

It belongs to the MurCDEF family.

It localises to the cytoplasm. The catalysed reaction is UDP-N-acetyl-alpha-D-muramate + L-alanine + ATP = UDP-N-acetyl-alpha-D-muramoyl-L-alanine + ADP + phosphate + H(+). The protein operates within cell wall biogenesis; peptidoglycan biosynthesis. Its function is as follows. Cell wall formation. The polypeptide is UDP-N-acetylmuramate--L-alanine ligase (Francisella tularensis subsp. mediasiatica (strain FSC147)).